A 265-amino-acid chain; its full sequence is Anamorsin homolog 1 (265 aa).

An N-terminal SAM-like domain region spans residues 1 to 143; it reads MAATVAEALA…KVSWSLGSSF (143 aa). The interval 144–175 is linker; sequence PLKKATKGLPKIQIDDDSELIDEDSLLTEDDL. Positions 186, 195, 198, and 200 each coordinate [2Fe-2S] cluster. A fe-S binding site A region spans residues 186-200; the sequence is CEVGATRKACKNCTC. The [4Fe-4S] cluster site is built by cysteine 226, cysteine 229, cysteine 237, and cysteine 240. 2 consecutive short sequence motifs (cx2C motif) follow at residues 226 to 229 and 237 to 240; these read CGNC and CGTC. Positions 226-240 are fe-S binding site B; that stretch reads CGNCGLGDAFRCGTC.

It belongs to the anamorsin family. Monomer. The cofactor is [2Fe-2S] cluster. It depends on [4Fe-4S] cluster as a cofactor.

It localises to the cytoplasm. It is found in the mitochondrion intermembrane space. Component of the cytosolic iron-sulfur (Fe-S) protein assembly (CIA) machinery. Required for the maturation of extramitochondrial Fe-S proteins. Part of an electron transfer chain functioning in an early step of cytosolic Fe-S biogenesis, facilitating the de novo assembly of a [4Fe-4S] cluster on the cytosolic Fe-S scaffold complex. Electrons are transferred from NADPH via a FAD- and FMN-containing diflavin oxidoreductase. Together with the diflavin oxidoreductase, also required for the assembly of the diferric tyrosyl radical cofactor of ribonucleotide reductase (RNR), probably by providing electrons for reduction during radical cofactor maturation in the catalytic small subunit. This is Anamorsin homolog 1 from Oryza sativa subsp. japonica (Rice).